The following is a 1164-amino-acid chain: Shugoshin 2A (1164 aa).

Positions 62–113 (LSKEKENSRRITTEKMQLQKEVEKLNFENTFLRLKLNTLNKKLVEIESHVSN) form a coiled coil. 5 disordered regions span residues 160–269 (SEND…VTMR), 287–314 (HQPT…NTQR), 390–492 (RKVK…PFSR), 521–541 (TFVI…DKDT), and 917–992 (PLDS…ETHG). Low complexity predominate over residues 182–198 (SKTSPDSTSSVSRQPSS). Polar residues-rich tracts occupy residues 238-247 (DQSPKSSLSE) and 288-299 (QPTSSPGSNWNN). Basic and acidic residues predominate over residues 390–412 (RKVKGASSDKKRESSKRECKDGS). Residues 443 to 472 (CISSTEQPSQVNTQKKRTLQNSSDQENIQN) are compositionally biased toward polar residues. Residues 525–541 (RKSEKDNLFPNQEDKDT) are compositionally biased toward basic and acidic residues. Residues 934–948 (GEQTNLPKMQKQSAG) are compositionally biased toward polar residues. At Ser1042 the chain carries Phosphoserine. The interval 1092 to 1164 (ITTGTRNPHH…EPSLRSKMRR (73 aa)) is disordered. Low complexity predominate over residues 1112–1125 (TSLVLVDTSSVSDT). The segment covering 1126 to 1140 (NPANPENESEGQSSH) has biased composition (polar residues).

The protein belongs to the shugoshin family. Part of an astrin (SPAG5)-kinastrin (SKAP) complex containing KNSTRN, SPAG5, PLK1, DYNLL1 and SGO2A. Interacts with CDCA8. Interacts with PPP2CA. As to expression, ubiquitously expressed in proliferating cells. Highly expressed in the testis and oocytes.

It is found in the nucleus. The protein resides in the chromosome. Its subcellular location is the centromere. It localises to the kinetochore. Cooperates with PPP2CA to protect centromeric cohesin from separase-mediated cleavage in oocytes specifically during meiosis I. Has a crucial role in protecting REC8 at centromeres from cleavage by separase. During meiosis, protects centromeric cohesion complexes until metaphase II/anaphase II transition, preventing premature release of meiosis-specific REC8 cohesin complexes from anaphase I centromeres. Is thus essential for an accurate gametogenesis. May act by targeting PPP2CA to centromeres, thus leading to cohesin dephosphorylation. Essential for recruiting KIF2C to the inner centromere and for correcting defective kinetochore attachments. Involved in centromeric enrichment of AUKRB in prometaphase. In Mus musculus (Mouse), this protein is Shugoshin 2A.